A 950-amino-acid polypeptide reads, in one-letter code: Bifunctional glutamine synthetase adenylyltransferase/adenylyl-removing enzyme (950 aa).

Residues 1–440 form an adenylyl removase region; the sequence is MLPLPSELQI…VFDHLIGDDA (440 aa). The segment at 449-950 is adenylyl transferase; that stretch reads HGLYKSLWQD…KWLVAAPSDV (502 aa).

Belongs to the GlnE family. It depends on Mg(2+) as a cofactor.

It catalyses the reaction [glutamine synthetase]-O(4)-(5'-adenylyl)-L-tyrosine + phosphate = [glutamine synthetase]-L-tyrosine + ADP. The enzyme catalyses [glutamine synthetase]-L-tyrosine + ATP = [glutamine synthetase]-O(4)-(5'-adenylyl)-L-tyrosine + diphosphate. Its function is as follows. Involved in the regulation of glutamine synthetase GlnA, a key enzyme in the process to assimilate ammonia. When cellular nitrogen levels are high, the C-terminal adenylyl transferase (AT) inactivates GlnA by covalent transfer of an adenylyl group from ATP to specific tyrosine residue of GlnA, thus reducing its activity. Conversely, when nitrogen levels are low, the N-terminal adenylyl removase (AR) activates GlnA by removing the adenylyl group by phosphorolysis, increasing its activity. The regulatory region of GlnE binds the signal transduction protein PII (GlnB) which indicates the nitrogen status of the cell. In Yersinia enterocolitica serotype O:8 / biotype 1B (strain NCTC 13174 / 8081), this protein is Bifunctional glutamine synthetase adenylyltransferase/adenylyl-removing enzyme.